A 197-amino-acid polypeptide reads, in one-letter code: Small ribosomal subunit protein uS4 (197 aa).

An S4 RNA-binding domain is found at 87-147 (SRIDNVIFRL…ESKKNTQRMK (61 aa)).

Belongs to the universal ribosomal protein uS4 family. In terms of assembly, part of the 30S ribosomal subunit. Contacts protein S5. The interaction surface between S4 and S5 is involved in control of translational fidelity.

In terms of biological role, one of the primary rRNA binding proteins, it binds directly to 16S rRNA where it nucleates assembly of the body of the 30S subunit. Its function is as follows. With S5 and S12 plays an important role in translational accuracy. This Agathobacter rectalis (strain ATCC 33656 / DSM 3377 / JCM 17463 / KCTC 5835 / VPI 0990) (Eubacterium rectale) protein is Small ribosomal subunit protein uS4.